The sequence spans 75 residues: Large ribosomal subunit protein eL14 (75 aa).

Belongs to the eukaryotic ribosomal protein eL14 family.

The polypeptide is Large ribosomal subunit protein eL14 (Methanothermobacter thermautotrophicus (strain ATCC 29096 / DSM 1053 / JCM 10044 / NBRC 100330 / Delta H) (Methanobacterium thermoautotrophicum)).